The following is a 542-amino-acid chain: Chaperonin GroEL 1 (542 aa).

ATP is bound by residues 30–33 (TLGP), lysine 51, 87–91 (DGTTT), glycine 415, and aspartate 496.

The protein belongs to the chaperonin (HSP60) family. Forms a cylinder of 14 subunits composed of two heptameric rings stacked back-to-back. Interacts with the co-chaperonin GroES.

The protein localises to the cytoplasm. The enzyme catalyses ATP + H2O + a folded polypeptide = ADP + phosphate + an unfolded polypeptide.. Functionally, together with its co-chaperonin GroES, plays an essential role in assisting protein folding. The GroEL-GroES system forms a nano-cage that allows encapsulation of the non-native substrate proteins and provides a physical environment optimized to promote and accelerate protein folding. This Sinorhizobium fredii (strain NBRC 101917 / NGR234) protein is Chaperonin GroEL 1.